The primary structure comprises 106 residues: NADH dehydrogenase [ubiquinone] 1 alpha subcomplex subunit 8-B (106 aa).

The residue at position 2 (S2) is an N-acetylserine. CHCH domains follow at residues 26–67 (GMRC…LKDL) and 68–106 (HQKCQKEMDDYVGCMYYYTNEFDLCRKEQEAFEKVCPLK). 3 short sequence motifs (cx9C motif) span residues 29 to 39 (CMPENVAFLKC), 49 to 59 (CLDKGRDVTRC), and 71 to 81 (CQKEMDDYVGC). Disulfide bonds link C29–C59, C39–C49, C71–C103, and C81–C92. The short motif at 92-103 (CRKEQEAFEKVC) is the Cx10C motif element.

The protein belongs to the complex I NDUFA8 subunit family. In terms of assembly, complex I is composed of at least 49 different subunits.

It localises to the mitochondrion. The protein localises to the mitochondrion intermembrane space. Its function is as follows. Accessory subunit of the mitochondrial membrane respiratory chain NADH dehydrogenase (Complex I), that is believed not to be involved in catalysis. Complex I functions in the transfer of electrons from NADH to the respiratory chain. The immediate electron acceptor for the enzyme is believed to be ubiquinone. The protein is NADH dehydrogenase [ubiquinone] 1 alpha subcomplex subunit 8-B of Arabidopsis thaliana (Mouse-ear cress).